The chain runs to 577 residues: Isocitrate dehydrogenase kinase/phosphatase (577 aa).

ATP is bound by residues 318 to 324 (APGVRGM) and Lys-339. The active site involves Asp-374.

The protein belongs to the AceK family.

The protein localises to the cytoplasm. The enzyme catalyses L-seryl-[isocitrate dehydrogenase] + ATP = O-phospho-L-seryl-[isocitrate dehydrogenase] + ADP + H(+). Bifunctional enzyme which can phosphorylate or dephosphorylate isocitrate dehydrogenase (IDH) on a specific serine residue. This is a regulatory mechanism which enables bacteria to bypass the Krebs cycle via the glyoxylate shunt in response to the source of carbon. When bacteria are grown on glucose, IDH is fully active and unphosphorylated, but when grown on acetate or ethanol, the activity of IDH declines drastically concomitant with its phosphorylation. This chain is Isocitrate dehydrogenase kinase/phosphatase, found in Pseudomonas aeruginosa (strain LESB58).